A 574-amino-acid polypeptide reads, in one-letter code: Putative ABC transporter ATP-binding protein VVA0347 (574 aa).

ABC transporter domains lie at 3–244 and 299–533; these read IEFS…GIRE and LDVR…ANLT. Residues 37-44 and 332-339 contribute to the ATP site; these read GPSGSGKS and GKNGSGKS.

It belongs to the ABC transporter superfamily.

It localises to the cell inner membrane. Functionally, probably part of an ABC transporter complex. Responsible for energy coupling to the transport system. The polypeptide is Putative ABC transporter ATP-binding protein VVA0347 (Vibrio vulnificus (strain YJ016)).